A 237-amino-acid polypeptide reads, in one-letter code: Class B acid phosphatase (237 aa).

The N-terminal stretch at 1 to 25 (MRKVSLALSAACLLFTLNYTASALA) is a signal peptide. Asp-69 functions as the Nucleophile in the catalytic mechanism. Mg(2+)-binding residues include Asp-69 and Asp-71. Catalysis depends on Asp-71, which acts as the Proton donor. Residues 137–138 (TG) and Lys-177 contribute to the substrate site. Asp-192 is a binding site for Mg(2+).

It belongs to the class B bacterial acid phosphatase family. Homotetramer. Mg(2+) is required as a cofactor.

It localises to the periplasm. The catalysed reaction is a phosphate monoester + H2O = an alcohol + phosphate. In terms of biological role, dephosphorylates several organic phosphate monoesters. Also has a phosphotransferase activity catalyzing the transfer of low-energy phosphate groups from organic phosphate monoesters to free hydroxyl groups of various organic compounds. The protein is Class B acid phosphatase of Citrobacter rodentium (strain ICC168) (Citrobacter freundii biotype 4280).